A 72-amino-acid polypeptide reads, in one-letter code: Translation initiation factor IF-1 (72 aa).

Residues 1 to 72 (MSKSDIIEMQ…TRGRITWRAK (72 aa)) enclose the S1-like domain.

This sequence belongs to the IF-1 family. As to quaternary structure, component of the 30S ribosomal translation pre-initiation complex which assembles on the 30S ribosome in the order IF-2 and IF-3, IF-1 and N-formylmethionyl-tRNA(fMet); mRNA recruitment can occur at any time during PIC assembly.

It localises to the cytoplasm. One of the essential components for the initiation of protein synthesis. Stabilizes the binding of IF-2 and IF-3 on the 30S subunit to which N-formylmethionyl-tRNA(fMet) subsequently binds. Helps modulate mRNA selection, yielding the 30S pre-initiation complex (PIC). Upon addition of the 50S ribosomal subunit IF-1, IF-2 and IF-3 are released leaving the mature 70S translation initiation complex. The sequence is that of Translation initiation factor IF-1 from Clostridium perfringens (strain 13 / Type A).